The chain runs to 354 residues: Uroporphyrinogen decarboxylase (354 aa).

Substrate-binding positions include 27-31 (RQAGR), Asp-77, Tyr-153, Thr-208, and His-326.

Belongs to the uroporphyrinogen decarboxylase family. As to quaternary structure, homodimer.

Its subcellular location is the cytoplasm. It carries out the reaction uroporphyrinogen III + 4 H(+) = coproporphyrinogen III + 4 CO2. It participates in porphyrin-containing compound metabolism; protoporphyrin-IX biosynthesis; coproporphyrinogen-III from 5-aminolevulinate: step 4/4. Catalyzes the decarboxylation of four acetate groups of uroporphyrinogen-III to yield coproporphyrinogen-III. The polypeptide is Uroporphyrinogen decarboxylase (Neisseria meningitidis serogroup C / serotype 2a (strain ATCC 700532 / DSM 15464 / FAM18)).